The following is a 783-amino-acid chain: BMP/retinoic acid-inducible neural-specific protein 2 (783 aa).

Residues 1–33 (MRWQCGTRFRGLRPVVAPWTALLALGLPGWVLA) form the signal peptide. The MACPF domain maps to 85-281 (RYRIYREFAR…FVAAALSYIT (197 aa)). Residues asparagine 185, asparagine 354, asparagine 473, asparagine 579, asparagine 626, and asparagine 658 are each glycosylated (N-linked (GlcNAc...) asparagine).

Belongs to the BRINP family.

The protein localises to the secreted. Inhibits neuronal cell proliferation by negative regulation of the cell cycle transition. This is BMP/retinoic acid-inducible neural-specific protein 2 (BRINP2) from Pongo abelii (Sumatran orangutan).